The sequence spans 462 residues: Glycine--tRNA ligase (462 aa).

2 residues coordinate substrate: arginine 100 and glutamate 174. Residues 206–208, 216–221, 290–291, and 334–337 each bind ATP; these read RNE, FRTREF, EL, and GADR. 221–225 is a substrate binding site; that stretch reads FEQME. 330–334 provides a ligand contact to substrate; the sequence is EPSLG.

The protein belongs to the class-II aminoacyl-tRNA synthetase family. Homodimer.

It is found in the cytoplasm. It catalyses the reaction tRNA(Gly) + glycine + ATP = glycyl-tRNA(Gly) + AMP + diphosphate. Catalyzes the attachment of glycine to tRNA(Gly). This is Glycine--tRNA ligase from Ruminiclostridium cellulolyticum (strain ATCC 35319 / DSM 5812 / JCM 6584 / H10) (Clostridium cellulolyticum).